Here is a 500-residue protein sequence, read N- to C-terminus: ATP synthase subunit alpha (500 aa).

An ATP-binding site is contributed by 167–174 (GDRQTGKT).

It belongs to the ATPase alpha/beta chains family. F-type ATPases have 2 components, CF(1) - the catalytic core - and CF(0) - the membrane proton channel. CF(1) has five subunits: alpha(3), beta(3), gamma(1), delta(1), epsilon(1). CF(0) has three main subunits: a(1), b(2) and c(9-12). The alpha and beta chains form an alternating ring which encloses part of the gamma chain. CF(1) is attached to CF(0) by a central stalk formed by the gamma and epsilon chains, while a peripheral stalk is formed by the delta and b chains.

Its subcellular location is the cell inner membrane. The catalysed reaction is ATP + H2O + 4 H(+)(in) = ADP + phosphate + 5 H(+)(out). In terms of biological role, produces ATP from ADP in the presence of a proton gradient across the membrane. The alpha chain is a regulatory subunit. In Wolinella succinogenes (strain ATCC 29543 / DSM 1740 / CCUG 13145 / JCM 31913 / LMG 7466 / NCTC 11488 / FDC 602W) (Vibrio succinogenes), this protein is ATP synthase subunit alpha.